We begin with the raw amino-acid sequence, 551 residues long: MFS-type transporter ATEG_00331 (551 aa).

The N-terminal stretch at 1-18 (MKAWLLVSSLCLSTFIAA) is a signal peptide. Helical transmembrane passes span 40-60 (LEFT…TPPW), 71-91 (PVLM…ALAI), 102-122 (IQGT…GDVF), and 132-152 (GVLG…GGAF). Residues Asn165 and Asn178 are each glycosylated (N-linked (GlcNAc...) asparagine). 8 helical membrane passes run 179–199 (LTTS…FLEV), 206–228 (IIEG…TVMF), 233–255 (GYGG…FGIG), 324–344 (VYLL…GLYI), 354–374 (IYFG…LQPY), 380–400 (IIIF…APII), 417–437 (TVFF…GVIF), and 493–513 (SEWI…VFIS). Asn524 is a glycosylation site (N-linked (GlcNAc...) asparagine).

This sequence belongs to the major facilitator superfamily. TCR/Tet family.

The protein resides in the membrane. MFS-type transporter; part of the gene cluster that mediates the biosynthesis of isoflavipucine. This Aspergillus terreus (strain NIH 2624 / FGSC A1156) protein is MFS-type transporter ATEG_00331.